Reading from the N-terminus, the 63-residue chain is uncharacterized protein (63 aa).

The first 15 residues, 1-15 (MRNPVVWGMIYFAVG), serve as a signal peptide directing secretion. C16 carries the N-palmitoyl cysteine lipid modification. C16 is lipidated: S-diacylglycerol cysteine. Residues 34–56 (SILLMVFAAYNISISFKMFAFSF) traverse the membrane as a helical segment.

It localises to the cell membrane. This is an uncharacterized protein from Bacillus subtilis (strain 168).